The primary structure comprises 91 residues: UPF0223 protein SAB0963 (91 aa).

This sequence belongs to the UPF0223 family.

The chain is UPF0223 protein SAB0963 from Staphylococcus aureus (strain bovine RF122 / ET3-1).